The primary structure comprises 1108 residues: Multidrug resistance regulator 1 (1108 aa).

The span at 1 to 19 (MSIATTPIETPKSPKSTEP) shows a compositional bias: polar residues. Residues 1 to 27 (MSIATTPIETPKSPKSTEPQVRKRKKV) are disordered. Positions 31–59 (CTNCRKRKIRCDRQHPCNNCIKSKKHNAC) form a DNA-binding region, zn(2)-C6 fungal-type. Polar residues predominate over residues 68–83 (PANFSTNGSSHGNTVP). 3 disordered regions span residues 68–138 (PANF…SENE), 968–990 (DQTYSTSSESSSTPNKDSPLDSR), and 1021–1064 (AQQQ…YYGN). 2 stretches are compositionally biased toward basic and acidic residues: residues 86–104 (RPYEESARIPIRFDAEAPR) and 114–123 (NERKNSKKSP). Over residues 124 to 138 (DNTVANNQQTASENE) the composition is skewed to polar residues. Positions 134-165 (ASENEVTITLSELNMLKQRLQNIEANINAQSN) form a coiled coil. Low complexity-rich tracts occupy residues 970–980 (TYSTSSESSST) and 1023–1041 (QQRQQESQPFTSSQSQSQS).

The protein resides in the nucleus. Its function is as follows. Transcription factor that acts as the central regulator of the MDR1 efflux pump. Other target genes include those encoding oxidoreductases, whose up-regulation in fluconazole-resistant isolates may help to prevent cell damage resulting from the generation of toxic molecules in the presence of fluconazole and thereby contribute to drug resistance. In Candida albicans (strain SC5314 / ATCC MYA-2876) (Yeast), this protein is Multidrug resistance regulator 1.